A 977-amino-acid polypeptide reads, in one-letter code: Disks large-associated protein 1 (977 aa).

2 disordered regions span residues 150 to 203 and 349 to 371; these read TKSH…GWWS and KAMGDEDSGDSDTSPKPSPKVAA. Phosphoserine occurs at positions 169, 356, 359, 362, 366, 383, 412, 415, 419, 422, 431, 503, 510, and 562. At Thr-563 the chain carries Phosphothreonine. Phosphoserine is present on residues Ser-565 and Ser-589. Thr-590 bears the Phosphothreonine mark. 2 positions are modified to phosphoserine: Ser-592 and Ser-595. Interaction with DYL2 regions lie at residues 650–661 and 672–683; these read LSIGIQVDDAEE and SKFQSVGVQVEE. The disordered stretch occupies residues 899–965; that stretch reads WKQMDPLDKK…QNSATESAES (67 aa). Basic and acidic residues-rich tracts occupy residues 903–912 and 928–943; these read DPLDKKERRA and IRERSLESSQRQEARK. Phosphoserine is present on Ser-932. Residues 954-963 are compositionally biased toward polar residues; sequence VRQNSATESA. The PDZ-binding motif lies at 975-977; that stretch reads TRL.

Belongs to the SAPAP family. Interacts with guanylate kinase-like domain of DLG1, DLG2, DLG3, DLG4 and AIP1. Interacts with the PDZ domain of SHANK1, SHANK2 and SHANK3. Found in a complex with DLG4 and SHANK1, SHANK2 or SHANK3. Found in a complex with DLG4 and BEGAIN. Interacts with DYL2 and LRFN1. Interacts with MPP2 (via the SH3-Guanylate kinase-like sub-module). Post-translationally, ubiquitinated by TRIM3; leading to proteasomal degradation. In terms of tissue distribution, expressed in brain.

The protein resides in the cell membrane. It localises to the postsynaptic density. It is found in the synapse. Functionally, part of the postsynaptic scaffold in neuronal cells. The sequence is that of Disks large-associated protein 1 (DLGAP1) from Homo sapiens (Human).